A 289-amino-acid polypeptide reads, in one-letter code: Pyridoxal kinase PdxY (289 aa).

Substrate contacts are provided by residues S9 and 44–45 (TQ). Residues D112, A144, E149, K183, and 210–213 (RPLV) contribute to the ATP site. D225 is a binding site for substrate.

Belongs to the pyridoxine kinase family. PdxY subfamily. As to quaternary structure, homodimer. The cofactor is Mg(2+).

It catalyses the reaction pyridoxal + ATP = pyridoxal 5'-phosphate + ADP + H(+). Its pathway is cofactor metabolism; pyridoxal 5'-phosphate salvage; pyridoxal 5'-phosphate from pyridoxal: step 1/1. Pyridoxal kinase involved in the salvage pathway of pyridoxal 5'-phosphate (PLP). Catalyzes the phosphorylation of pyridoxal to PLP. In Proteus mirabilis, this protein is Pyridoxal kinase PdxY.